Here is a 120-residue protein sequence, read N- to C-terminus: Large ribosomal subunit protein bL36m (120 aa).

Belongs to the bacterial ribosomal protein bL36 family. As to quaternary structure, component of the mitochondrial ribosome large subunit (39S) which comprises a 16S rRNA and about 50 distinct proteins.

The protein resides in the mitochondrion. In Osmerus mordax (Rainbow smelt), this protein is Large ribosomal subunit protein bL36m (mrpl36).